A 317-amino-acid chain; its full sequence is Acetyl-coenzyme A carboxylase carboxyl transferase subunit alpha (317 aa).

Residues 31–292 form the CoA carboxyltransferase C-terminal domain; the sequence is RFEPELAQLE…DKALWATLTS (262 aa).

This sequence belongs to the AccA family. In terms of assembly, acetyl-CoA carboxylase is a heterohexamer composed of biotin carboxyl carrier protein (AccB), biotin carboxylase (AccC) and two subunits each of ACCase subunit alpha (AccA) and ACCase subunit beta (AccD).

The protein localises to the cytoplasm. It catalyses the reaction N(6)-carboxybiotinyl-L-lysyl-[protein] + acetyl-CoA = N(6)-biotinyl-L-lysyl-[protein] + malonyl-CoA. Its pathway is lipid metabolism; malonyl-CoA biosynthesis; malonyl-CoA from acetyl-CoA: step 1/1. In terms of biological role, component of the acetyl coenzyme A carboxylase (ACC) complex. First, biotin carboxylase catalyzes the carboxylation of biotin on its carrier protein (BCCP) and then the CO(2) group is transferred by the carboxyltransferase to acetyl-CoA to form malonyl-CoA. The sequence is that of Acetyl-coenzyme A carboxylase carboxyl transferase subunit alpha from Sorangium cellulosum (strain So ce56) (Polyangium cellulosum (strain So ce56)).